A 308-amino-acid chain; its full sequence is Glutathione synthetase (308 aa).

An ATP-grasp domain is found at Lys-120–Leu-304. Ala-146–Gly-202 provides a ligand contact to ATP. Mg(2+) contacts are provided by Glu-275 and Asn-277.

This sequence belongs to the prokaryotic GSH synthase family. Requires Mg(2+) as cofactor. The cofactor is Mn(2+).

It catalyses the reaction gamma-L-glutamyl-L-cysteine + glycine + ATP = glutathione + ADP + phosphate + H(+). The protein operates within sulfur metabolism; glutathione biosynthesis; glutathione from L-cysteine and L-glutamate: step 2/2. The protein is Glutathione synthetase of Prochlorococcus marinus (strain MIT 9313).